We begin with the raw amino-acid sequence, 67 residues long: DNA-directed RNA polymerase subunit omega (67 aa).

The protein belongs to the RNA polymerase subunit omega family. As to quaternary structure, the RNAP catalytic core consists of 2 alpha, 1 beta, 1 beta' and 1 omega subunit. When a sigma factor is associated with the core the holoenzyme is formed, which can initiate transcription.

The enzyme catalyses RNA(n) + a ribonucleoside 5'-triphosphate = RNA(n+1) + diphosphate. Its function is as follows. Promotes RNA polymerase assembly. Latches the N- and C-terminal regions of the beta' subunit thereby facilitating its interaction with the beta and alpha subunits. The protein is DNA-directed RNA polymerase subunit omega of Bacillus velezensis (strain DSM 23117 / BGSC 10A6 / LMG 26770 / FZB42) (Bacillus amyloliquefaciens subsp. plantarum).